Reading from the N-terminus, the 566-residue chain is Proline--tRNA ligase 1 (566 aa).

It belongs to the class-II aminoacyl-tRNA synthetase family. ProS type 1 subfamily. In terms of assembly, homodimer.

It localises to the cytoplasm. The catalysed reaction is tRNA(Pro) + L-proline + ATP = L-prolyl-tRNA(Pro) + AMP + diphosphate. In terms of biological role, catalyzes the attachment of proline to tRNA(Pro) in a two-step reaction: proline is first activated by ATP to form Pro-AMP and then transferred to the acceptor end of tRNA(Pro). As ProRS can inadvertently accommodate and process non-cognate amino acids such as alanine and cysteine, to avoid such errors it has two additional distinct editing activities against alanine. One activity is designated as 'pretransfer' editing and involves the tRNA(Pro)-independent hydrolysis of activated Ala-AMP. The other activity is designated 'posttransfer' editing and involves deacylation of mischarged Ala-tRNA(Pro). The misacylated Cys-tRNA(Pro) is not edited by ProRS. In Bacillus cereus (strain ZK / E33L), this protein is Proline--tRNA ligase 1.